The chain runs to 131 residues: Small ribosomal subunit protein uS8 (131 aa).

The protein belongs to the universal ribosomal protein uS8 family. In terms of assembly, part of the 30S ribosomal subunit. Contacts proteins S5 and S12.

One of the primary rRNA binding proteins, it binds directly to 16S rRNA central domain where it helps coordinate assembly of the platform of the 30S subunit. This chain is Small ribosomal subunit protein uS8, found in Bordetella parapertussis (strain 12822 / ATCC BAA-587 / NCTC 13253).